The chain runs to 310 residues: Probable cell division protein WhiA (310 aa).

Positions 277-310 (SLKELAEQVPDGPISKSGVNHRLKKLHEIAENLR) form a DNA-binding region, H-T-H motif.

Belongs to the WhiA family.

Functionally, involved in cell division and chromosome segregation. The protein is Probable cell division protein WhiA of Lactobacillus delbrueckii subsp. bulgaricus (strain ATCC BAA-365 / Lb-18).